We begin with the raw amino-acid sequence, 257 residues long: NAD-capped RNA hydrolase NudC (257 aa).

Substrate-binding residues include Lys-25 and Arg-69. Zn(2+) contacts are provided by Cys-98 and Cys-101. Glu-111 contributes to the substrate binding site. Zn(2+)-binding residues include Cys-116 and Cys-119. Tyr-124 serves as a coordination point for substrate. The Nudix hydrolase domain maps to 125–248; the sequence is PQIAPCIIVA…TVARRLIEDT (124 aa). A divalent metal cation-binding residues include Ala-158, Glu-174, and Glu-178. Residues 159–180 carry the Nudix box motif; it reads GFVEVGETLEQAVAREVMEESG. 192–199 is a binding site for substrate; that stretch reads QPWPFPQS. Glu-219 contacts a divalent metal cation. Ala-241 serves as a coordination point for substrate.

Belongs to the Nudix hydrolase family. NudC subfamily. As to quaternary structure, homodimer. Requires Mg(2+) as cofactor. Mn(2+) is required as a cofactor. Zn(2+) serves as cofactor.

It carries out the reaction a 5'-end NAD(+)-phospho-ribonucleoside in mRNA + H2O = a 5'-end phospho-adenosine-phospho-ribonucleoside in mRNA + beta-nicotinamide D-ribonucleotide + 2 H(+). The enzyme catalyses NAD(+) + H2O = beta-nicotinamide D-ribonucleotide + AMP + 2 H(+). The catalysed reaction is NADH + H2O = reduced beta-nicotinamide D-ribonucleotide + AMP + 2 H(+). In terms of biological role, mRNA decapping enzyme that specifically removes the nicotinamide adenine dinucleotide (NAD) cap from a subset of mRNAs by hydrolyzing the diphosphate linkage to produce nicotinamide mononucleotide (NMN) and 5' monophosphate mRNA. The NAD-cap is present at the 5'-end of some mRNAs and stabilizes RNA against 5'-processing. Has preference for mRNAs with a 5'-end purine. Catalyzes the hydrolysis of a broad range of dinucleotide pyrophosphates. The polypeptide is NAD-capped RNA hydrolase NudC (Escherichia coli O7:K1 (strain IAI39 / ExPEC)).